Consider the following 630-residue polypeptide: Elongation factor 4 (630 aa).

Residues 1–22 form a disordered region; that stretch reads MTVARNRAGAGPGKGSPISSFA. Positions 30–211 constitute a tr-type G domain; it reads ARIRNFCIIA…EVVRQVPAPV (182 aa). Residues 42-47 and 158-161 contribute to the GTP site; these read DHGKST and NKID.

This sequence belongs to the TRAFAC class translation factor GTPase superfamily. Classic translation factor GTPase family. LepA subfamily.

It localises to the cell membrane. It carries out the reaction GTP + H2O = GDP + phosphate + H(+). Functionally, required for accurate and efficient protein synthesis under certain stress conditions. May act as a fidelity factor of the translation reaction, by catalyzing a one-codon backward translocation of tRNAs on improperly translocated ribosomes. Back-translocation proceeds from a post-translocation (POST) complex to a pre-translocation (PRE) complex, thus giving elongation factor G a second chance to translocate the tRNAs correctly. Binds to ribosomes in a GTP-dependent manner. This is Elongation factor 4 from Rhodococcus opacus (strain B4).